A 304-amino-acid chain; its full sequence is Ribosomal RNA small subunit methyltransferase H (304 aa).

S-adenosyl-L-methionine-binding positions include 37–39 (GGH), D57, F79, D100, and H107.

The protein belongs to the methyltransferase superfamily. RsmH family.

It is found in the cytoplasm. The catalysed reaction is cytidine(1402) in 16S rRNA + S-adenosyl-L-methionine = N(4)-methylcytidine(1402) in 16S rRNA + S-adenosyl-L-homocysteine + H(+). Specifically methylates the N4 position of cytidine in position 1402 (C1402) of 16S rRNA. The protein is Ribosomal RNA small subunit methyltransferase H of Bacteroides fragilis (strain YCH46).